The sequence spans 130 residues: MAQSRRVEKVAALIRKEMSELLSNGIRDQRVNTTMITITEVEVSGDLQHCKIFVSIYGNEIQKDEVFSGLEASQSFLKGELGRRLQMRRAPEVVFKLDRGMEKGISVLNLLEKLEAERNIKDKKLIEFQE.

It belongs to the RbfA family. Monomer. Binds 30S ribosomal subunits, but not 50S ribosomal subunits or 70S ribosomes.

The protein resides in the cytoplasm. Its function is as follows. One of several proteins that assist in the late maturation steps of the functional core of the 30S ribosomal subunit. Associates with free 30S ribosomal subunits (but not with 30S subunits that are part of 70S ribosomes or polysomes). Required for efficient processing of 16S rRNA. May interact with the 5'-terminal helix region of 16S rRNA. This Prochlorococcus marinus (strain SARG / CCMP1375 / SS120) protein is Ribosome-binding factor A.